The sequence spans 405 residues: MPFTKMCTSKLANPLMKYYLNLNGKSPLSKLSNSLNSSSFKFISCSPHIVCRELNTVSGVAIRPQTITKDDKRDFMAVFPDIVRDLTQLNPGISDLSTLISKLMQYNVSGGKKVRGLTVVYSYRMLAPDHALTPENIRLAQILGWCVEMLQGFFVVIDDLADQSVTRRGRPCWYRLPGVGLRASSDALLIQSGCFQLLQQHCKDKEFYVDLVELFLDALRRTTYGQTLDYVSSFPNINHLTMDRYNFITKYKTAYYTYHLPVATAMYMAGIYNAELHRQAKSVLLEMGHYFQVQDDYLDVFGDEEMIGKKGTDIQEGKCTWLAIIAFQRASPPQREVLESCYGTKEPEKIKKVKDIFIELSLPAVYHAYEEETYNLITRQIQQLSQGLPHELFLTLLHKLYGRKQ.

Residues D158 and D162 each contribute to the Mg(2+) site. Residues 158-162 (DDLAD) carry the DDXXD motif motif.

This sequence belongs to the FPP/GGPP synthase family. Mg(2+) serves as cofactor.

It carries out the reaction isopentenyl diphosphate + (2E)-geranyl diphosphate = (2E,6E)-farnesyl diphosphate + diphosphate. It participates in pheromone biosynthesis. Farnesyl pyrophosphate synthase involved in murgantiol biosynthesis, a male-released aggregation pheromone, by catalyzing the formation of (2E,6E)-farnesyl diphosphate. In Murgantia histrionica (Harlequin bug), this protein is Farnesyl pyrophosphate synthase.